Reading from the N-terminus, the 333-residue chain is GTPase Obg (333 aa).

The 159-residue stretch at 1–159 folds into the Obg domain; that stretch reads MQFIDLAEIH…RHLRLELKLL (159 aa). The OBG-type G domain occupies 160–328; that stretch reads AEVGIIGLPN…LLEAVWQELG (169 aa). GTP contacts are provided by residues 166–173, 191–195, 213–216, 280–283, and 309–311; these read GLPNAGKS, FTTLV, DIPG, NKID, and SAV. Positions 173 and 193 each coordinate Mg(2+).

It belongs to the TRAFAC class OBG-HflX-like GTPase superfamily. OBG GTPase family. In terms of assembly, monomer. Requires Mg(2+) as cofactor.

The protein resides in the cytoplasm. Functionally, an essential GTPase which binds GTP, GDP and possibly (p)ppGpp with moderate affinity, with high nucleotide exchange rates and a fairly low GTP hydrolysis rate. Plays a role in control of the cell cycle, stress response, ribosome biogenesis and in those bacteria that undergo differentiation, in morphogenesis control. The sequence is that of GTPase Obg from Thermosynechococcus vestitus (strain NIES-2133 / IAM M-273 / BP-1).